Reading from the N-terminus, the 427-residue chain is Phosphatidylserine decarboxylase proenzyme 1, mitochondrial (427 aa).

The N-terminal 77 residues, Met-1–Ala-77, are a transit peptide targeting the mitochondrion. The Mitochondrial matrix segment spans residues Val-78 to Tyr-88. A helical membrane pass occupies residues Ile-89–Phe-107. The Mitochondrial intermembrane segment spans residues Arg-108–Tyr-427. Catalysis depends on charge relay system; for autoendoproteolytic cleavage activity residues Asp-210, His-268, and Ser-379. The active-site Schiff-base intermediate with substrate; via pyruvic acid; for decarboxylase activity is the Ser-379. Ser-379 is modified (pyruvic acid (Ser); by autocatalysis).

Belongs to the phosphatidylserine decarboxylase family. PSD-B subfamily. Eukaryotic type I sub-subfamily. As to quaternary structure, heterodimer of a large membrane-associated beta subunit and a small pyruvoyl-containing alpha subunit. The cofactor is pyruvate. Is synthesized initially as an inactive proenzyme. Formation of the active enzyme involves a self-maturation process in which the active site pyruvoyl group is generated from an internal serine residue via an autocatalytic post-translational modification. Two non-identical subunits are generated from the proenzyme in this reaction, and the pyruvate is formed at the N-terminus of the alpha chain, which is derived from the carboxyl end of the proenzyme. The autoendoproteolytic cleavage occurs by a canonical serine protease mechanism, in which the side chain hydroxyl group of the serine supplies its oxygen atom to form the C-terminus of the beta chain, while the remainder of the serine residue undergoes an oxidative deamination to produce ammonia and the pyruvoyl prosthetic group on the alpha chain. During this reaction, the Ser that is part of the protease active site of the proenzyme becomes the pyruvoyl prosthetic group, which constitutes an essential element of the active site of the mature decarboxylase.

The protein localises to the mitochondrion. The protein resides in the mitochondrion inner membrane. The enzyme catalyses a 1,2-diacyl-sn-glycero-3-phospho-L-serine + H(+) = a 1,2-diacyl-sn-glycero-3-phosphoethanolamine + CO2. It participates in phospholipid metabolism; phosphatidylethanolamine biosynthesis; phosphatidylethanolamine from CDP-diacylglycerol: step 2/2. Catalyzes the formation of phosphatidylethanolamine (PtdEtn) from phosphatidylserine (PtdSer). Plays a central role in phospholipid metabolism and in the interorganelle trafficking of phosphatidylserine. This is Phosphatidylserine decarboxylase proenzyme 1, mitochondrial from Toxoplasma gondii (strain ATCC 50853 / GT1).